Reading from the N-terminus, the 257-residue chain is Dihydroorotate dehydrogenase B (NAD(+)), electron transfer subunit (257 aa).

The 101-residue stretch at 2–102 (MKQEQMTVVR…LGPLGNGFPL (101 aa)) folds into the FAD-binding FR-type domain. FAD-binding positions include 53-56 (RPLS), 70-72 (IYR), and 77-78 (GT). Residues cysteine 221, cysteine 226, cysteine 229, and cysteine 244 each contribute to the [2Fe-2S] cluster site.

It belongs to the PyrK family. As to quaternary structure, heterotetramer of 2 PyrK and 2 PyrD type B subunits. It depends on [2Fe-2S] cluster as a cofactor. FAD serves as cofactor.

The protein operates within pyrimidine metabolism; UMP biosynthesis via de novo pathway; orotate from (S)-dihydroorotate (NAD(+) route): step 1/1. In terms of biological role, responsible for channeling the electrons from the oxidation of dihydroorotate from the FMN redox center in the PyrD type B subunit to the ultimate electron acceptor NAD(+). The sequence is that of Dihydroorotate dehydrogenase B (NAD(+)), electron transfer subunit from Geobacillus sp. (strain WCH70).